The following is an 880-amino-acid chain: A-adding tRNA nucleotidyltransferase (880 aa).

CBS domains lie at 315–373 and 377–435; these read MSSP…NLPV and MHTE…RNAE. 487-490 contributes to the ATP binding site; the sequence is GFVR. D500 and D502 together coordinate Mg(2+). Residues 574-575, N579, 619-628, R632, and R661 contribute to the ATP site; these read RD and DPTRVFRAIR.

It belongs to the tRNA nucleotidyltransferase/poly(A) polymerase family. Mg(2+) is required as a cofactor.

It carries out the reaction a tRNA with a 3' CC end + ATP = a tRNA with a 3' CCA end + diphosphate. Functionally, tRNA nucleotidyltransferase involved in the synthesis of the tRNA CCA terminus. Adds the terminal adenosine residue to tRNA. In Geobacter sulfurreducens (strain ATCC 51573 / DSM 12127 / PCA), this protein is A-adding tRNA nucleotidyltransferase.